We begin with the raw amino-acid sequence, 148 residues long: Arginine repressor (148 aa).

This sequence belongs to the ArgR family.

It is found in the cytoplasm. It participates in amino-acid biosynthesis; L-arginine biosynthesis [regulation]. Functionally, regulates arginine biosynthesis genes. The sequence is that of Arginine repressor from Chlorobium chlorochromatii (strain CaD3).